The primary structure comprises 192 residues: Putative molybdenum cofactor guanylyltransferase (192 aa).

GTP contacts are provided by residues 8–10 (LAG), lysine 21, aspartate 67, and aspartate 101. Residue aspartate 101 coordinates Mg(2+).

The protein belongs to the MobA family. Monomer. Mg(2+) is required as a cofactor.

The protein resides in the cytoplasm. It carries out the reaction Mo-molybdopterin + GTP + H(+) = Mo-molybdopterin guanine dinucleotide + diphosphate. In terms of biological role, transfers a GMP moiety from GTP to Mo-molybdopterin (Mo-MPT) cofactor (Moco or molybdenum cofactor) to form Mo-molybdopterin guanine dinucleotide (Mo-MGD) cofactor. In Neisseria meningitidis serogroup B (strain ATCC BAA-335 / MC58), this protein is Putative molybdenum cofactor guanylyltransferase.